We begin with the raw amino-acid sequence, 373 residues long: Zinc finger protein CONSTANS-LIKE 10 (373 aa).

Residues cysteine 5, cysteine 8, cysteine 28, histidine 33, cysteine 48, cysteine 51, cysteine 71, and histidine 76 each contribute to the Zn(2+) site. A B box-type 1; atypical zinc finger spans residues 5 to 47 (CDFCGEQRSMVYCRSDAACLCLSCDRNVHSANALSKRHSRTLV). The B box-type 2; atypical zinc-finger motif lies at 48–92 (CERCNAQPASVRCSDERVSLCQNCDWSGHDGKNSTTTSHHKRQTI). The segment at 152 to 172 (PETSSAAQGMDHSSVPENSSM) is disordered. The CCT domain maps to 316 to 358 (RNNAVMRYKEKKKARKFDKRVRYVSRKERADVRRRVKGRFVKS).

Belongs to the CONSTANS family.

Its subcellular location is the nucleus. The protein is Zinc finger protein CONSTANS-LIKE 10 (COL10) of Arabidopsis thaliana (Mouse-ear cress).